A 474-amino-acid polypeptide reads, in one-letter code: tRNA-2-methylthio-N(6)-dimethylallyladenosine synthase (474 aa).

The MTTase N-terminal domain maps to 3–120 (KKLLIKTWGC…LPEMIKQSQT (118 aa)). Residues cysteine 12, cysteine 49, cysteine 83, cysteine 157, cysteine 161, and cysteine 164 each contribute to the [4Fe-4S] cluster site. Residues 143–375 (RAEGATAFVS…QQTINAQAMR (233 aa)) enclose the Radical SAM core domain. The TRAM domain occupies 378-441 (RLMLATEQRV…ANSLRGELVR (64 aa)).

Belongs to the methylthiotransferase family. MiaB subfamily. In terms of assembly, monomer. [4Fe-4S] cluster serves as cofactor.

It is found in the cytoplasm. The catalysed reaction is N(6)-dimethylallyladenosine(37) in tRNA + (sulfur carrier)-SH + AH2 + 2 S-adenosyl-L-methionine = 2-methylsulfanyl-N(6)-dimethylallyladenosine(37) in tRNA + (sulfur carrier)-H + 5'-deoxyadenosine + L-methionine + A + S-adenosyl-L-homocysteine + 2 H(+). Functionally, catalyzes the methylthiolation of N6-(dimethylallyl)adenosine (i(6)A), leading to the formation of 2-methylthio-N6-(dimethylallyl)adenosine (ms(2)i(6)A) at position 37 in tRNAs that read codons beginning with uridine. The polypeptide is tRNA-2-methylthio-N(6)-dimethylallyladenosine synthase (Vibrio parahaemolyticus serotype O3:K6 (strain RIMD 2210633)).